Reading from the N-terminus, the 153-residue chain is Endoribonuclease YbeY (153 aa).

Zn(2+) is bound by residues His-119, His-123, and His-129.

It belongs to the endoribonuclease YbeY family. The cofactor is Zn(2+).

The protein resides in the cytoplasm. In terms of biological role, single strand-specific metallo-endoribonuclease involved in late-stage 70S ribosome quality control and in maturation of the 3' terminus of the 16S rRNA. The protein is Endoribonuclease YbeY of Desulforamulus reducens (strain ATCC BAA-1160 / DSM 100696 / MI-1) (Desulfotomaculum reducens).